The chain runs to 239 residues: Adapter protein MecA (239 aa).

Residues E118 to G128 are compositionally biased toward basic and acidic residues. A disordered region spans residues E118–R137.

Belongs to the MecA family. As to quaternary structure, homodimer.

Functionally, enables the recognition and targeting of unfolded and aggregated proteins to the ClpC protease or to other proteins involved in proteolysis. This chain is Adapter protein MecA, found in Staphylococcus aureus (strain JH1).